We begin with the raw amino-acid sequence, 586 residues long: Aspartate--tRNA(Asp/Asn) ligase (586 aa).

L-aspartate is bound at residue glutamate 175. Residues 199–202 (QIFK) are aspartate. An L-aspartate-binding site is contributed by arginine 221. ATP-binding positions include 221 to 223 (RDE) and glutamine 230. Histidine 448 provides a ligand contact to L-aspartate. Position 482 (glutamate 482) interacts with ATP. Arginine 489 contributes to the L-aspartate binding site. 534–537 (GVDR) contributes to the ATP binding site.

The protein belongs to the class-II aminoacyl-tRNA synthetase family. Type 1 subfamily. In terms of assembly, homodimer.

Its subcellular location is the cytoplasm. It catalyses the reaction tRNA(Asx) + L-aspartate + ATP = L-aspartyl-tRNA(Asx) + AMP + diphosphate. Its function is as follows. Aspartyl-tRNA synthetase with relaxed tRNA specificity since it is able to aspartylate not only its cognate tRNA(Asp) but also tRNA(Asn). Reaction proceeds in two steps: L-aspartate is first activated by ATP to form Asp-AMP and then transferred to the acceptor end of tRNA(Asp/Asn). In Syntrophomonas wolfei subsp. wolfei (strain DSM 2245B / Goettingen), this protein is Aspartate--tRNA(Asp/Asn) ligase.